Here is a 160-residue protein sequence, read N- to C-terminus: Endoplasmic reticulum transmembrane protein 2 (160 aa).

Residues M1–G2 lie on the Lumenal side of the membrane. Residues V3–V23 traverse the membrane as a helical segment. Over L24 to K45 the chain is Cytoplasmic. The chain crosses the membrane as a helical span at residues K46–W66. At K67–N103 the chain is on the lumenal side. The chain crosses the membrane as a helical span at residues V104–L124. The Cytoplasmic portion of the chain corresponds to R125–F160. A Di-lysine motif motif is present at residues K157–F160.

It belongs to the BCAP29/BCAP31 family.

It is found in the endoplasmic reticulum membrane. In terms of biological role, may play a role in anterograde transport of membrane proteins from the endoplasmic reticulum to the Golgi. The chain is Endoplasmic reticulum transmembrane protein 2 (YET2) from Saccharomyces cerevisiae (strain ATCC 204508 / S288c) (Baker's yeast).